We begin with the raw amino-acid sequence, 1052 residues long: Calmin (1052 aa).

Positions 1 to 288 (MAAQEWDWFQ…IVTYVAQFLE (288 aa)) are actin-binding. Positions 32–139 (NVQKRTFTRW…LIWNIILFFQ (108 aa)) constitute a Calponin-homology (CH) 1 domain. Residues 148–168 (SRSSPSSSLSPGSGGTDSDSS) are compositionally biased toward low complexity. The tract at residues 148 to 178 (SRSSPSSSLSPGSGGTDSDSSYPPTPTTERS) is disordered. The 105-residue stretch at 187–291 (RKAIKTLLSW…YVAQFLERFP (105 aa)) folds into the Calponin-homology (CH) 2 domain. Disordered stretches follow at residues 391-420 (STGKTGSIAEPTPESSILSTRKDGRRSNSL), 455-545 (KATK…TLLA), 585-727 (STSQ…SPPL), and 758-929 (GEDL…DSSI). Composition is skewed to basic and acidic residues over residues 455-465 (KATKELSKQDG) and 472-495 (VSKEKKKSEQEARLVLEAASDKVP). The span at 509-529 (AQPSQDSSFCNGTVESPSSQG) shows a compositional bias: polar residues. Serine 537 carries the post-translational modification Phosphoserine. 3 stretches are compositionally biased toward basic and acidic residues: residues 594 to 614 (PSSHEKTRGEEEGSENHAEKP), 622 to 651 (PRAETEAAESRLEPKKLEPPPKDPEQEDQG), and 659 to 669 (PADKKPKVYEK). Serine 679 is modified (phosphoserine). Residue threonine 710 is modified to Phosphothreonine. Basic and acidic residues predominate over residues 711-720 (LRSHSEEGLD). Serine 724 carries the phosphoserine modification. Over residues 759-773 (EDLKSEDTDLEHPED) the composition is skewed to basic and acidic residues. Acidic residues predominate over residues 780-791 (REEEADEDEEEA). Residues 792-801 (QSSQSSCSFS) are compositionally biased toward low complexity. Residues 836-849 (SHEDHQPKETKENG) are compositionally biased toward basic and acidic residues. Residue serine 856 is modified to Phosphoserine. Basic residues predominate over residues 880–889 (SKKKEKRKHM). Position 925 is a phosphoserine (serine 925). The chain crosses the membrane as a helical; Anchor for type IV membrane protein span at residues 1027-1047 (VIYFILFLWLLVYCLLLFPQL).

In terms of tissue distribution, expressed in testis. Expressed during testis maturation process and in maturing spermatids. In brain, it is expressed in neurons of the hippocampus, cerebral cortex, and thalamus, Purkinje cells, and also in the choroid plexus and ependymal cells. Expressed predominantly in dendrites and cell bodies of the neurons, but not in axons. The level of expression increases during the period of maturation of the mouse brain after birth.

It is found in the membrane. It localises to the cytoplasm. The chain is Calmin (Clmn) from Mus musculus (Mouse).